Here is a 1116-residue protein sequence, read N- to C-terminus: uncharacterized protein (1116 aa).

A helical transmembrane segment spans residues 3–20 (FFLTFLLFLFTLFSLFVY).

The protein resides in the membrane. This is an uncharacterized protein from Aquifex aeolicus (strain VF5).